We begin with the raw amino-acid sequence, 108 residues long: Integration host factor subunit alpha (108 aa).

Belongs to the bacterial histone-like protein family. As to quaternary structure, heterodimer of an alpha and a beta chain.

In terms of biological role, this protein is one of the two subunits of integration host factor, a specific DNA-binding protein that functions in genetic recombination as well as in transcriptional and translational control. The sequence is that of Integration host factor subunit alpha from Rhodopseudomonas palustris (strain BisB18).